We begin with the raw amino-acid sequence, 117 residues long: Ig heavy chain V region 102 (117 aa).

An N-terminal signal peptide occupies residues 1–19; it reads MGWSCIILFLVATATGVHS. The tract at residues 20 to 49 is framework-1; it reads HVQLQQPGAELVKPGASVKVSCKASGYTFT. An intrachain disulfide couples C41 to C115. The tract at residues 50–54 is complementarity-determining-1; it reads SYWMH. The interval 55–68 is framework-2; it reads WVKQRPGQGLEWIG. Positions 69–85 are complementarity-determining-2; sequence RIHPSDSDTNYNQKFKG. The framework-3 stretch occupies residues 86-117; it reads KATLTVDKSSSTAYMQLSSLTSEDSAVYYCAI.

In Mus musculus (Mouse), this protein is Ig heavy chain V region 102.